The primary structure comprises 557 residues: Probable protein kinase UbiB (557 aa).

In terms of domain architecture, Protein kinase spans 121-509; it reads AFDTTPLASA…RKLQTRVVTA (389 aa). Residues 127-135 and lysine 154 each bind ATP; that span reads LASASIAQV. Residue aspartate 289 is the Proton acceptor of the active site. Helical transmembrane passes span 506 to 526 and 535 to 555; these read VVTAITGSGLLVVAAVLYGLH and VPVWSWISGGAGSAALLIAWL.

The protein belongs to the ABC1 family. UbiB subfamily.

Its subcellular location is the cell inner membrane. The protein operates within cofactor biosynthesis; ubiquinone biosynthesis [regulation]. Functionally, is probably a protein kinase regulator of UbiI activity which is involved in aerobic coenzyme Q (ubiquinone) biosynthesis. The sequence is that of Probable protein kinase UbiB from Xanthomonas campestris pv. campestris (strain B100).